The sequence spans 189 residues: dCTP deaminase (189 aa).

DCTP contacts are provided by residues 112–117 (KSTYAR), 136–138 (TLE), Gln157, Tyr171, and Gln181. Glu138 acts as the Proton donor/acceptor in catalysis.

It belongs to the dCTP deaminase family. As to quaternary structure, homotrimer.

The catalysed reaction is dCTP + H2O + H(+) = dUTP + NH4(+). The protein operates within pyrimidine metabolism; dUMP biosynthesis; dUMP from dCTP (dUTP route): step 1/2. Functionally, catalyzes the deamination of dCTP to dUTP. This chain is dCTP deaminase, found in Xanthomonas oryzae pv. oryzae (strain MAFF 311018).